Consider the following 119-residue polypeptide: Holo-[acyl-carrier-protein] synthase (119 aa).

2 residues coordinate Mg(2+): Asp-8 and Glu-58.

It belongs to the P-Pant transferase superfamily. AcpS family. Requires Mg(2+) as cofactor.

The protein localises to the cytoplasm. It catalyses the reaction apo-[ACP] + CoA = holo-[ACP] + adenosine 3',5'-bisphosphate + H(+). Functionally, transfers the 4'-phosphopantetheine moiety from coenzyme A to a Ser of acyl-carrier-protein. The sequence is that of Holo-[acyl-carrier-protein] synthase from Geobacillus sp. (strain WCH70).